A 337-amino-acid chain; its full sequence is Viral cathepsin (337 aa).

Positions 1-16 (MNKILILLLLVSAVLT) are cleaved as a signal peptide. Positions 17–126 (SHDQVVAVTI…VVDGPGQRQR (110 aa)) are cleaved as a propeptide — activation peptide. 3 disulfide bridges follow: Cys147/Cys188, Cys181/Cys221, and Cys276/Cys324. Cys150 is a catalytic residue. Active-site residues include His283 and Asn303.

This sequence belongs to the peptidase C1 family. Synthesized as an inactive proenzyme and activated by proteolytic removal of the inhibitory propeptide.

The catalysed reaction is Endopeptidase of broad specificity, hydrolyzing substrates of both cathepsin L and cathepsin B.. In terms of biological role, cysteine protease that plays an essential role in host liquefaction to facilitate horizontal transmission of the virus. May participate in the degradation of foreign protein expressed by the baculovirus system. In Mamestra configurata (bertha armyworm), this protein is Viral cathepsin (VCATH).